Reading from the N-terminus, the 383-residue chain is ATP phosphoribosyltransferase regulatory subunit (383 aa).

Belongs to the class-II aminoacyl-tRNA synthetase family. HisZ subfamily. As to quaternary structure, heteromultimer composed of HisG and HisZ subunits.

It localises to the cytoplasm. The protein operates within amino-acid biosynthesis; L-histidine biosynthesis; L-histidine from 5-phospho-alpha-D-ribose 1-diphosphate: step 1/9. Required for the first step of histidine biosynthesis. May allow the feedback regulation of ATP phosphoribosyltransferase activity by histidine. This chain is ATP phosphoribosyltransferase regulatory subunit, found in Paraburkholderia xenovorans (strain LB400).